The sequence spans 469 residues: Diaminobutyrate--2-oxoglutarate transaminase (469 aa).

At Lys-290 the chain carries N6-(pyridoxal phosphate)lysine.

This sequence belongs to the class-III pyridoxal-phosphate-dependent aminotransferase family. Requires pyridoxal 5'-phosphate as cofactor.

The protein localises to the cytoplasm. It catalyses the reaction L-2,4-diaminobutanoate + 2-oxoglutarate = L-aspartate 4-semialdehyde + L-glutamate. In terms of biological role, involved in the degradation of ectoine, which allows H.elongata to utilize ectoine as both a carbon and a nitrogen source for growth. Probably catalyzes the conversion of L-2,4-diaminobutyrate (DABA) to L-aspartate beta-semialdehyde (ASA) by transamination with 2-oxoglutarate. The protein is Diaminobutyrate--2-oxoglutarate transaminase of Halomonas elongata (strain ATCC 33173 / DSM 2581 / NBRC 15536 / NCIMB 2198 / 1H9).